The sequence spans 313 residues: Protochlorophyllide reductase (313 aa).

It belongs to the short-chain dehydrogenases/reductases (SDR) family. POR subfamily.

The protein resides in the plastid. Its subcellular location is the chloroplast. The enzyme catalyses chlorophyllide a + NADP(+) = protochlorophyllide a + NADPH + H(+). The protein operates within porphyrin-containing compound metabolism; chlorophyll biosynthesis. In terms of biological role, phototransformation of protochlorophyllide (Pchlide) to chlorophyllide (Chlide). This Avena sativa (Oat) protein is Protochlorophyllide reductase.